A 265-amino-acid chain; its full sequence is Cytosolic Fe-S cluster assembly factor NUBP2 homolog (265 aa).

ATP is bound at residue 22 to 29 (GKGGVGKS). [4Fe-4S] cluster is bound by residues C196 and C199.

Belongs to the Mrp/NBP35 ATP-binding proteins family. NUBP2/CFD1 subfamily. As to quaternary structure, heterotetramer of 2 NUBP1 and 2 NUBP2 chains. It depends on [4Fe-4S] cluster as a cofactor.

It localises to the cytoplasm. Functionally, component of the cytosolic iron-sulfur (Fe/S) protein assembly (CIA) machinery. Required for maturation of extramitochondrial Fe-S proteins. The NUBP1-NUBP2 heterotetramer forms a Fe-S scaffold complex, mediating the de novo assembly of an Fe-S cluster and its transfer to target apoproteins. This is Cytosolic Fe-S cluster assembly factor NUBP2 homolog from Trichoplax adhaerens (Trichoplax reptans).